Reading from the N-terminus, the 180-residue chain is ATP synthase subunit delta (180 aa).

Belongs to the ATPase delta chain family. In terms of assembly, F-type ATPases have 2 components, F(1) - the catalytic core - and F(0) - the membrane proton channel. F(1) has five subunits: alpha(3), beta(3), gamma(1), delta(1), epsilon(1). F(0) has three main subunits: a(1), b(2) and c(10-14). The alpha and beta chains form an alternating ring which encloses part of the gamma chain. F(1) is attached to F(0) by a central stalk formed by the gamma and epsilon chains, while a peripheral stalk is formed by the delta and b chains.

It is found in the cell membrane. Its function is as follows. F(1)F(0) ATP synthase produces ATP from ADP in the presence of a proton or sodium gradient. F-type ATPases consist of two structural domains, F(1) containing the extramembraneous catalytic core and F(0) containing the membrane proton channel, linked together by a central stalk and a peripheral stalk. During catalysis, ATP synthesis in the catalytic domain of F(1) is coupled via a rotary mechanism of the central stalk subunits to proton translocation. This protein is part of the stalk that links CF(0) to CF(1). It either transmits conformational changes from CF(0) to CF(1) or is implicated in proton conduction. The chain is ATP synthase subunit delta from Dehalococcoides mccartyi (strain ATCC BAA-2266 / KCTC 15142 / 195) (Dehalococcoides ethenogenes (strain 195)).